Reading from the N-terminus, the 352-residue chain is Quinolinate synthase (352 aa).

Residues His-48 and Ser-69 each contribute to the iminosuccinate site. Position 114 (Cys-114) interacts with [4Fe-4S] cluster. Residues 140–142 (YAN) and Ser-157 contribute to the iminosuccinate site. Residue Cys-201 coordinates [4Fe-4S] cluster. Iminosuccinate contacts are provided by residues 227–229 (HPE) and Thr-244. Cys-298 lines the [4Fe-4S] cluster pocket.

It belongs to the quinolinate synthase family. Type 1 subfamily. The cofactor is [4Fe-4S] cluster.

It localises to the cytoplasm. The enzyme catalyses iminosuccinate + dihydroxyacetone phosphate = quinolinate + phosphate + 2 H2O + H(+). The protein operates within cofactor biosynthesis; NAD(+) biosynthesis; quinolinate from iminoaspartate: step 1/1. Its function is as follows. Catalyzes the condensation of iminoaspartate with dihydroxyacetone phosphate to form quinolinate. This is Quinolinate synthase from Ectopseudomonas mendocina (strain ymp) (Pseudomonas mendocina).